Consider the following 210-residue polypeptide: Na(+)-translocating NADH-quinone reductase subunit D (210 aa).

The next 6 helical transmembrane spans lie at 42 to 62, 66 to 86, 103 to 123, 131 to 151, 154 to 174, and 178 to 198; these read VVMT…ISTI, IPNS…VIVV, VYVG…AFAM, FMDG…VGAF, LFGS…NGGW, and NGLL…IWAV.

It belongs to the NqrDE/RnfAE family. As to quaternary structure, composed of six subunits; NqrA, NqrB, NqrC, NqrD, NqrE and NqrF.

It is found in the cell inner membrane. The catalysed reaction is a ubiquinone + n Na(+)(in) + NADH + H(+) = a ubiquinol + n Na(+)(out) + NAD(+). NQR complex catalyzes the reduction of ubiquinone-1 to ubiquinol by two successive reactions, coupled with the transport of Na(+) ions from the cytoplasm to the periplasm. NqrA to NqrE are probably involved in the second step, the conversion of ubisemiquinone to ubiquinol. This Psychromonas ingrahamii (strain DSM 17664 / CCUG 51855 / 37) protein is Na(+)-translocating NADH-quinone reductase subunit D.